The primary structure comprises 607 residues: Pogo transposable element with KRAB domain (607 aa).

Residues 8 to 29 are a coiled coil; that stretch reads LNLTLKEEQKEEEVEIQELEDG. Lys13 is covalently cross-linked (Glycyl lysine isopeptide (Lys-Gly) (interchain with G-Cter in SUMO2)). One can recognise a KRAB domain in the interval 47 to 118; sequence ALFDEVAIYF…DEWRLQGVTF (72 aa). One can recognise an HTH CENPB-type domain in the interval 250-323; it reads AFRGPKNGRF…MRRYDLSLRH (74 aa). Residues 355-567 enclose the DDE-1 domain; that stretch reads YEVAQMGNAD…ISSESIVQGF (213 aa). Lys384 is covalently cross-linked (Glycyl lysine isopeptide (Lys-Gly) (interchain with G-Cter in SUMO2)). The disordered stretch occupies residues 588–607; that stretch reads GELPKEPPKECGPESVAEGD. Residues 589-599 are compositionally biased toward basic and acidic residues; that stretch reads ELPKEPPKECG.

It localises to the nucleus. The chain is Pogo transposable element with KRAB domain (Pogk) from Mus musculus (Mouse).